We begin with the raw amino-acid sequence, 437 residues long: UDP-N-acetylmuramate--L-alanine ligase (437 aa).

108–114 (GAHGKTS) provides a ligand contact to ATP.

Belongs to the MurCDEF family.

Its subcellular location is the cytoplasm. The catalysed reaction is UDP-N-acetyl-alpha-D-muramate + L-alanine + ATP = UDP-N-acetyl-alpha-D-muramoyl-L-alanine + ADP + phosphate + H(+). It participates in cell wall biogenesis; peptidoglycan biosynthesis. Cell wall formation. The polypeptide is UDP-N-acetylmuramate--L-alanine ligase (Staphylococcus aureus (strain COL)).